A 254-amino-acid chain; its full sequence is Cytochrome c oxidase subunit 2 (254 aa).

At 12–38 the chain is on the mitochondrial intermembrane side; that stretch reads DAPEPWQICYQDSATKIMSGIDKLTGE. Residues 39 to 59 traverse the membrane as a helical segment; that stretch reads IFYYETLLLIIVGWVLISAII. At 60–73 the chain is on the mitochondrial matrix side; the sequence is KYTKTELSYKYFNH. A helical membrane pass occupies residues 74-94; the sequence is GTLIEILWTCSPAFILIAISF. The Mitochondrial intermembrane portion of the chain corresponds to 95–248; the sequence is PSFKLLYLMD…KYLEWLNIHL (154 aa). Cu cation is bound by residues His-182, Cys-217, Glu-219, Cys-221, His-225, and Met-228. A Mg(2+)-binding site is contributed by Glu-219.

The protein belongs to the cytochrome c oxidase subunit 2 family. Component of the cytochrome c oxidase (complex IV, CIV), a multisubunit enzyme composed of a catalytic core of 3 subunits and several supernumerary subunits. The complex exists as a monomer or a dimer and forms supercomplexes (SCs) in the inner mitochondrial membrane with ubiquinol-cytochrome c oxidoreductase (cytochrome b-c1 complex, complex III, CIII). The cofactor is Cu cation.

It is found in the mitochondrion inner membrane. It catalyses the reaction 4 Fe(II)-[cytochrome c] + O2 + 8 H(+)(in) = 4 Fe(III)-[cytochrome c] + 2 H2O + 4 H(+)(out). In terms of biological role, component of the cytochrome c oxidase, the last enzyme in the mitochondrial electron transport chain which drives oxidative phosphorylation. The respiratory chain contains 3 multisubunit complexes succinate dehydrogenase (complex II, CII), ubiquinol-cytochrome c oxidoreductase (cytochrome b-c1 complex, complex III, CIII) and cytochrome c oxidase (complex IV, CIV), that cooperate to transfer electrons derived from NADH and succinate to molecular oxygen, creating an electrochemical gradient over the inner membrane that drives transmembrane transport and the ATP synthase. Cytochrome c oxidase is the component of the respiratory chain that catalyzes the reduction of oxygen to water. Electrons originating from reduced cytochrome c in the intermembrane space (IMS) are transferred via the dinuclear copper A center (CU(A)) of subunit 2 and heme A of subunit 1 to the active site in subunit 1, a binuclear center (BNC) formed by heme A3 and copper B (CU(B)). The BNC reduces molecular oxygen to 2 water molecules using 4 electrons from cytochrome c in the IMS and 4 protons from the mitochondrial matrix. The polypeptide is Cytochrome c oxidase subunit 2 (Zancudomyces culisetae (Gut fungus)).